A 245-amino-acid chain; its full sequence is Uridylate kinase (245 aa).

12–15 (KISG) contributes to the ATP binding site. Gly55 is a UMP binding site. Residues Gly56 and Arg60 each coordinate ATP. UMP-binding positions include Asp76 and 137 to 144 (AGAPYLTT). Positions 164, 171, and 174 each coordinate ATP.

It belongs to the UMP kinase family. Homohexamer.

It is found in the cytoplasm. It catalyses the reaction UMP + ATP = UDP + ADP. It functions in the pathway pyrimidine metabolism; CTP biosynthesis via de novo pathway; UDP from UMP (UMPK route): step 1/1. Its activity is regulated as follows. Inhibited by UTP. Catalyzes the reversible phosphorylation of UMP to UDP. The chain is Uridylate kinase from Chlamydia muridarum (strain MoPn / Nigg).